Here is a 319-residue protein sequence, read N- to C-terminus: tRNA uridine(34) hydroxylase (319 aa).

Positions 127 to 221 (KQEDTVIIDA…YGKDPEVQGE (95 aa)) constitute a Rhodanese domain. C181 (cysteine persulfide intermediate) is an active-site residue.

It belongs to the TrhO family.

It carries out the reaction uridine(34) in tRNA + AH2 + O2 = 5-hydroxyuridine(34) in tRNA + A + H2O. Its function is as follows. Catalyzes oxygen-dependent 5-hydroxyuridine (ho5U) modification at position 34 in tRNAs. The protein is tRNA uridine(34) hydroxylase of Bacillus cereus (strain ZK / E33L).